A 296-amino-acid polypeptide reads, in one-letter code: Nucleotide-binding protein M28_Spy0517 (296 aa).

13–20 (GMSGAGKT) provides a ligand contact to ATP. 63-66 (DMRS) lines the GTP pocket.

Belongs to the RapZ-like family.

Functionally, displays ATPase and GTPase activities. This Streptococcus pyogenes serotype M28 (strain MGAS6180) protein is Nucleotide-binding protein M28_Spy0517.